Reading from the N-terminus, the 338-residue chain is Lipoate-protein ligase A (338 aa).

One can recognise a BPL/LPL catalytic domain in the interval 29–216 (PATQRVLFLW…AFFAHYGERV (188 aa)). ATP is bound by residues R71, 76–79 (GAVF), and K134. K134 contributes to the (R)-lipoate binding site.

This sequence belongs to the LplA family. Monomer.

The protein localises to the cytoplasm. It catalyses the reaction L-lysyl-[lipoyl-carrier protein] + (R)-lipoate + ATP = N(6)-[(R)-lipoyl]-L-lysyl-[lipoyl-carrier protein] + AMP + diphosphate + H(+). The protein operates within protein modification; protein lipoylation via exogenous pathway; protein N(6)-(lipoyl)lysine from lipoate: step 1/2. It participates in protein modification; protein lipoylation via exogenous pathway; protein N(6)-(lipoyl)lysine from lipoate: step 2/2. Its function is as follows. Catalyzes both the ATP-dependent activation of exogenously supplied lipoate to lipoyl-AMP and the transfer of the activated lipoyl onto the lipoyl domains of lipoate-dependent enzymes. In Escherichia coli (strain K12 / MC4100 / BW2952), this protein is Lipoate-protein ligase A.